Here is a 172-residue protein sequence, read N- to C-terminus: Adenine phosphoribosyltransferase (172 aa).

It belongs to the purine/pyrimidine phosphoribosyltransferase family. As to quaternary structure, homodimer.

It is found in the cytoplasm. It catalyses the reaction AMP + diphosphate = 5-phospho-alpha-D-ribose 1-diphosphate + adenine. It participates in purine metabolism; AMP biosynthesis via salvage pathway; AMP from adenine: step 1/1. Catalyzes a salvage reaction resulting in the formation of AMP, that is energically less costly than de novo synthesis. This Streptococcus uberis (strain ATCC BAA-854 / 0140J) protein is Adenine phosphoribosyltransferase.